Consider the following 251-residue polypeptide: UPF0246 protein DSY0297 (251 aa).

This sequence belongs to the UPF0246 family.

This chain is UPF0246 protein DSY0297, found in Desulfitobacterium hafniense (strain Y51).